A 251-amino-acid polypeptide reads, in one-letter code: Triosephosphate isomerase (251 aa).

Position 9 to 11 (9 to 11 (NWK)) interacts with substrate. The Electrophile role is filled by H96. The active-site Proton acceptor is the E167. Residues G173, S213, and 234 to 235 (GG) each bind substrate.

The protein belongs to the triosephosphate isomerase family. Homodimer.

It is found in the cytoplasm. The enzyme catalyses D-glyceraldehyde 3-phosphate = dihydroxyacetone phosphate. The protein operates within carbohydrate biosynthesis; gluconeogenesis. It functions in the pathway carbohydrate degradation; glycolysis; D-glyceraldehyde 3-phosphate from glycerone phosphate: step 1/1. Functionally, involved in the gluconeogenesis. Catalyzes stereospecifically the conversion of dihydroxyacetone phosphate (DHAP) to D-glyceraldehyde-3-phosphate (G3P). The polypeptide is Triosephosphate isomerase (Phocaeicola vulgatus (strain ATCC 8482 / DSM 1447 / JCM 5826 / CCUG 4940 / NBRC 14291 / NCTC 11154) (Bacteroides vulgatus)).